The chain runs to 86 residues: Large ribosomal subunit protein bL27 (86 aa).

The disordered stretch occupies residues 1-22; it reads MATKKAGGSSRNGRDSAGRRLG.

Belongs to the bacterial ribosomal protein bL27 family.

This is Large ribosomal subunit protein bL27 from Rickettsia rickettsii (strain Iowa).